Here is a 186-residue protein sequence, read N- to C-terminus: Ribosome-recycling factor (186 aa).

This sequence belongs to the RRF family.

It is found in the cytoplasm. Functionally, responsible for the release of ribosomes from messenger RNA at the termination of protein biosynthesis. May increase the efficiency of translation by recycling ribosomes from one round of translation to another. This is Ribosome-recycling factor from Cupriavidus metallidurans (strain ATCC 43123 / DSM 2839 / NBRC 102507 / CH34) (Ralstonia metallidurans).